The primary structure comprises 74 residues: Conotoxin VxVIA (74 aa).

An N-terminal signal peptide occupies residues 1-22 (MKLTCVLIIAVLFLTAYQLATA). The propeptide occupies 23–47 (ASHAKGKQKHRALRPADKHFRFTKR). Disulfide bonds link cysteine 48/cysteine 62, cysteine 55/cysteine 66, and cysteine 61/cysteine 73.

Expressed by the venom duct.

The protein resides in the secreted. When injected intracranially in mice, induces a series of symptoms such as quivering, climbing, scratching, barrel rolling and paralysis of limbs. Unexpectedly, no effect is observed on ionic currents when tested on locust DUM neuron. The sequence is that of Conotoxin VxVIA from Conus vexillum (Flag cone).